The chain runs to 194 residues: Histone H1.0-A (194 aa).

Disordered regions lie at residues 1-29 (MTENSAPAAKPRRSKASKKSTDHPKYSDM) and 96-194 (ADEV…GRKK). Positions 22–95 (DHPKYSDMIL…GASGSFRLAK (74 aa)) constitute an H15 domain. 2 stretches are compositionally biased toward basic residues: residues 102–164 (PAKK…KTVR) and 172–194 (KAKKAKPSKPKAKASPKKSGRKK).

It belongs to the histone H1/H5 family.

It is found in the nucleus. It localises to the chromosome. In terms of biological role, histones H1 are necessary for the condensation of nucleosome chains into higher-order structures. The histones H1.0 are found in cells that are in terminal stages of differentiation or that have low rates of cell division. The polypeptide is Histone H1.0-A (h1-0-a) (Xenopus laevis (African clawed frog)).